Here is a 512-residue protein sequence, read N- to C-terminus: MWRVRKRGYFGIWSFPLIIAAVCAQSVNDPSNMSLVKETVDRLLKGYDIRLRPDFGGPPVAVGMNIDIASIDMVSEVNMDYTLTMYFQQAWRDKRLSYNVIPLNLTLDNRVADQLWVPDTYFLNDKKSFVHGVTVKNRMIRLHPDGTVLYGLRITTTAACMMDLRRYPLDEQNCTLEIESYGYTTDDIEFYWRGDDNAVTGVTKIELPQFSIVDYKLITKKVVFSTGSYPRLSLSFKLKRNIGYFILQTYMPSILITILSWVSFWINYDASAARVALGITTVLTMTTINTHLRETLPKIPYVKAIDMYLMGCFVFVFMALLEYALVNYIFFGRGPQRQKKAAEKAANANNEKMRLDVNKMFYKDIKQNGTQYRSLWDPTGDLSPTRRTTNYDFSLYTMDPHENILLSTLEIKNEMATSEAVMGLGDPRSTMLAYDASSIQYRKAGLPRHSFGRNALERHVAQKKSRLRRRASQLKITIPDLTDVNAIDRWSRIFFPVVFSFFNIVYWLYYVN.

A signal peptide spans 1-25; it reads MWRVRKRGYFGIWSFPLIIAAVCAQ. At 26 to 244 the chain is on the extracellular side; the sequence is SVNDPSNMSL…SFKLKRNIGY (219 aa). 2 N-linked (GlcNAc...) asparagine glycosylation sites follow: N32 and N104. Position 121 (Y121) interacts with histamine. Cysteines 160 and 174 form a disulfide. N173 is a glycosylation site (N-linked (GlcNAc...) asparagine). Residues 180–181 and T226 each bind histamine; that span reads SY. 2 residues coordinate 4-aminobutanoate: Y181 and T226. The next 3 helical transmembrane spans lie at 245–266, 270–292, and 304–326; these read FILQ…SFWI, ASAA…NTHL, and AIDM…YALV. Residues 327–489 are Cytoplasmic-facing; sequence NYIFFGRGPQ…DLTDVNAIDR (163 aa). Phosphotyrosine is present on Y441. A helical transmembrane segment spans residues 490-511; that stretch reads WSRIFFPVVFSFFNIVYWLYYV.

This sequence belongs to the ligand-gated ion channel (TC 1.A.9) family. Gamma-aminobutyric acid receptor (TC 1.A.9.5) subfamily. GABRB2 sub-subfamily. Heteropentamer, formed by a combination of alpha (GABRA1-6), beta (GABRB1-3), gamma (GABRG1-3), delta (GABRD), epsilon (GABRE), rho (GABRR1-3), pi (GABRP) and theta (GABRQ) chains, each subunit exhibiting distinct physiological and pharmacological properties. Interacts with UBQLN1. May interact with KIF21B. Identified in a complex of 720 kDa composed of LHFPL4, NLGN2, GABRA1, GABRB2, GABRG2 and GABRB3. In terms of processing, glycosylated.

The protein localises to the postsynaptic cell membrane. Its subcellular location is the cell membrane. It localises to the cytoplasmic vesicle. It carries out the reaction chloride(in) = chloride(out). Its activity is regulated as follows. Allosterically activated by benzodiazepines and the anesthetic etomidate. Inhibited by the antagonist bicuculline. Potentiated by histamine. Its function is as follows. Beta subunit of the heteropentameric ligand-gated chloride channel gated by gamma-aminobutyric acid (GABA), a major inhibitory neurotransmitter in the brain. GABA-gated chloride channels, also named GABA(A) receptors (GABAAR), consist of five subunits arranged around a central pore and contain GABA active binding site(s) located at the alpha and beta subunit interface(s). When activated by GABA, GABAARs selectively allow the flow of chloride anions across the cell membrane down their electrochemical gradient. Chloride influx into the postsynaptic neuron following GABAAR opening decreases the neuron ability to generate a new action potential, thereby reducing nerve transmission. GABAARs containing alpha-1 and beta-2 or -3 subunits exhibit synaptogenic activity; the gamma-2 subunit being necessary but not sufficient to induce rapid synaptic contacts formation. Extrasynaptic beta-2 receptors contribute to the tonic GABAergic inhibition. Beta-containing GABAARs can simultaneously bind GABA and histamine where histamine binds at the interface of two neighboring beta subunits, which may be involved in the regulation of sleep and wakefulness. The chain is Gamma-aminobutyric acid receptor subunit beta-2 from Mus musculus (Mouse).